Consider the following 300-residue polypeptide: Epimerase family protein MW0731 (300 aa).

The protein belongs to the NAD(P)-dependent epimerase/dehydratase family. SDR39U1 subfamily.

This chain is Epimerase family protein MW0731, found in Staphylococcus aureus (strain MW2).